A 2616-amino-acid chain; its full sequence is Serine protease ndl (2616 aa).

Positions 1-43 (MNYNMDEMEATRLLRHPRRWWSIGFGKRIVAISILVIIVLLFS) are cleaved as a signal peptide. Ser-215 and Ser-220 each carry phosphoserine. Residues 261 to 269 (ISWIIDGHD) form a WIID 1 repeat. Residue Asn-291 is glycosylated (N-linked (GlcNAc...) asparagine). The stretch at 320–328 (ISWILDHFD) is one WIID 2 repeat. N-linked (GlcNAc...) asparagine glycosylation occurs at Asn-347. The tract at residues 352 to 375 (SASSEPIVDTENTNSDHVPTTENG) is disordered. Asn-379 carries N-linked (GlcNAc...) asparagine glycosylation. The stretch at 399-407 (FDWILDGEE) is one WIID 3 repeat. A glycan (N-linked (GlcNAc...) asparagine) is linked at Asn-417. WIID repeat units follow at residues 446-454 (FDWIIDGRE) and 477-485 (FDWIIDGEE). 2 N-linked (GlcNAc...) asparagine glycosylation sites follow: Asn-492 and Asn-515. One copy of the WIID 6 repeat lies at 528–536 (FDWIIDGGE). Low complexity predominate over residues 537–547 (SSGEVSTSSTS). Positions 537–574 (SSGEVSTSSTSQPKLTTREAISNPESPRSSHPLDNPTS) are disordered. The segment covering 548 to 565 (QPKLTTREAISNPESPRS) has biased composition (polar residues). A phosphoserine mark is found at Ser-574 and Ser-581. Asn-598 carries N-linked (GlcNAc...) asparagine glycosylation. The O-linked (Xyl...) (glycosaminoglycan) serine glycan is linked to Ser-794. A disordered region spans residues 798–817 (GQGANIFSKNASPQKPTNGQ). A compositionally biased stretch (polar residues) spans 804–817 (FSKNASPQKPTNGQ). N-linked (GlcNAc...) asparagine glycosylation is present at Asn-827. An O-linked (Xyl...) (glycosaminoglycan) serine glycan is attached at Ser-829. Residue Asn-861 is glycosylated (N-linked (GlcNAc...) asparagine). LDL-receptor class A domains are found at residues 889 to 929 (SRCP…ACTC) and 955 to 1006 (FGCE…QCSM). 3 disulfides stabilise this stretch: Cys-891/Cys-905, Cys-899/Cys-918, and Cys-912/Cys-927. The region spanning 929–956 (CADRVDEERLCDGYEDCPMGEDELGCFG) is the LDL-receptor class A 2; truncated domain. Cystine bridges form between Cys-957/Cys-982, Cys-964/Cys-995, and Cys-989/Cys-1004. Asn-975 carries an N-linked (GlcNAc...) asparagine glycan. The Cell attachment site motif lies at 1031–1033 (RGD). Residue Asn-1064 is glycosylated (N-linked (GlcNAc...) asparagine). A phosphoserine mark is found at Ser-1134 and Ser-1136. A Peptidase S1 1 domain is found at 1145–1383 (IVGGSYTSAL…YLDWLEMATT (239 aa)). An intrachain disulfide couples Cys-1170 to Cys-1186. Catalysis depends on charge relay system residues His-1185 and Asp-1233. 6 disulfide bridges follow: Cys-1276–Cys-1338, Cys-1305–Cys-1317, Cys-1328–Cys-1359, Cys-1396–Cys-1408, Cys-1401–Cys-1421, and Cys-1415–Cys-1430. Ser-1332 acts as the Charge relay system in catalysis. Positions 1394-1432 (QLCPGFICVWGGKRCIAKRQRCDRNVDCLGGEDEVGCTY) constitute an LDL-receptor class A 4 domain. N-linked (GlcNAc...) asparagine glycosylation occurs at Asn-1445. Disordered regions lie at residues 1530–1557 (FTVS…PSTN) and 1683–1704 (PTTT…HSEK). Low complexity-rich tracts occupy residues 1537–1557 (TSPS…PSTN) and 1683–1700 (PTTT…SSST). An LDL-receptor class A 5; truncated domain is found at 1713–1743 (FVCKKMSQIVDIMMRCDRKVDCEDGTDELDC). Cystine bridges form between Cys-1728–Cys-1745, Cys-1734–Cys-1764, Cys-1758–Cys-1773, Cys-1776–Cys-1789, Cys-1783–Cys-1802, and Cys-1796–Cys-1811. The region spanning 1745–1775 (CKDYLKGSLKGLICDGKADCEDLTDEQNCVE) is the LDL-receptor class A 6; truncated domain. The LDL-receptor class A 7 domain occupies 1774–1813 (VECQSNEFRCPLSKTCLPLSSRCDNKVDCKFKEDEKDCFA). Asn-1878, Asn-1956, and Asn-2023 each carry an N-linked (GlcNAc...) asparagine glycan. Positions 2027–2301 (LVNEQLHEAI…LQDIIDKPSC (275 aa)) constitute a Peptidase S1 2 domain. Cysteines 2055 and 2071 form a disulfide. N-linked (GlcNAc...) asparagine glycosylation is found at Asn-2144, Asn-2173, Asn-2197, Asn-2237, and Asn-2269. Cys-2177 and Cys-2230 form a disulfide bridge. 3 consecutive LDL-receptor class A domains span residues 2308-2346 (PDCS…KCRQ), 2349-2389 (QQCA…ICSC), and 2419-2459 (CNCT…YCFG). 6 cysteine pairs are disulfide-bonded: Cys-2310–Cys-2320, Cys-2315–Cys-2333, Cys-2327–Cys-2344, Cys-2351–Cys-2364, Cys-2358–Cys-2377, and Cys-2371–Cys-2387. The LDL-receptor class A 10; truncated domain maps to 2387 to 2419 (CSCFTYLQATDPSKICDGKRNCWDKSDESSVLC). Asn-2420 is a glycosylation site (N-linked (GlcNAc...) asparagine). Disulfide bonds link Cys-2421-Cys-2435, Cys-2428-Cys-2448, and Cys-2442-Cys-2457. N-linked (GlcNAc...) asparagine glycans are attached at residues Asn-2556 and Asn-2601.

It belongs to the peptidase S1 family. In terms of processing, requires cleavage for activation (presumably). In terms of tissue distribution, follicle.

The protein localises to the secreted. The protein resides in the extracellular space. It is found in the extracellular matrix. In terms of biological role, component of the extracellular signaling pathway that establishes the dorsal-ventral pathway of the embryo. A protease cascade involving ndl, gd, snk and ea results in activation of the spz Toll receptor ligand; acts upstream of gd, snk and ea and is required for proteolytic processing of gd. Activation of ea requires activation of the ndl-gd-snk protease cascade and sulfation of a vitelline membrane component by pip. Localized activation of the Toll receptor in the ventral region of the embryo defines cell identities along the dorsal-ventral continuum. The polypeptide is Serine protease ndl (Drosophila melanogaster (Fruit fly)).